Reading from the N-terminus, the 390-residue chain is 8-amino-7-oxononanoate synthase (390 aa).

Residue Arg19 coordinates substrate. Pyridoxal 5'-phosphate is bound at residue 106-107; the sequence is GY. Residue His131 coordinates substrate. 3 residues coordinate pyridoxal 5'-phosphate: Ser176, His204, and Thr233. Residue Lys236 is modified to N6-(pyridoxal phosphate)lysine. Thr350 is a binding site for substrate.

The protein belongs to the class-II pyridoxal-phosphate-dependent aminotransferase family. BioF subfamily. Homodimer. It depends on pyridoxal 5'-phosphate as a cofactor.

It catalyses the reaction 6-carboxyhexanoyl-[ACP] + L-alanine + H(+) = (8S)-8-amino-7-oxononanoate + holo-[ACP] + CO2. It functions in the pathway cofactor biosynthesis; biotin biosynthesis. Catalyzes the decarboxylative condensation of pimeloyl-[acyl-carrier protein] and L-alanine to produce 8-amino-7-oxononanoate (AON), [acyl-carrier protein], and carbon dioxide. This Pseudomonas putida (strain W619) protein is 8-amino-7-oxononanoate synthase.